The sequence spans 304 residues: Acetaldehyde dehydrogenase 1 (304 aa).

Cys-131 acts as the Acyl-thioester intermediate in catalysis. Residues Ser-162 to Asn-170 and Asn-273 each bind NAD(+).

Belongs to the acetaldehyde dehydrogenase family.

The catalysed reaction is acetaldehyde + NAD(+) + CoA = acetyl-CoA + NADH + H(+). This Dechloromonas aromatica (strain RCB) protein is Acetaldehyde dehydrogenase 1.